Here is a 305-residue protein sequence, read N- to C-terminus: Translation initiation factor eIF2B subunit alpha (305 aa).

Lysine 35 bears the N6-acetyllysine mark.

This sequence belongs to the eIF-2B alpha/beta/delta subunits family. In terms of assembly, component of the translation initiation factor 2B (eIF2B) complex which is a heterodecamer of two sets of five different subunits: alpha, beta, gamma, delta and epsilon. Subunits alpha, beta and delta comprise a regulatory subcomplex and subunits epsilon and gamma comprise a catalytic subcomplex. Within the complex, the hexameric regulatory complex resides at the center, with the two heterodimeric catalytic subcomplexes bound on opposite sides.

The protein resides in the cytoplasm. Its subcellular location is the cytosol. Activated by the chemical integrated stress response (ISR) inhibitor ISRIB which stimulates guanine nucleotide exchange factor activity for both phosphorylated and unphosphorylated eIF2. Functionally, acts as a component of the translation initiation factor 2B (eIF2B) complex, which catalyzes the exchange of GDP for GTP on eukaryotic initiation factor 2 (eIF2) gamma subunit. Its guanine nucleotide exchange factor activity is repressed when bound to eIF2 complex phosphorylated on the alpha subunit, thereby limiting the amount of methionyl-initiator methionine tRNA available to the ribosome and consequently global translation is repressed. The sequence is that of Translation initiation factor eIF2B subunit alpha (EIF2B1) from Pongo abelii (Sumatran orangutan).